Reading from the N-terminus, the 347-residue chain is S-adenosylmethionine:tRNA ribosyltransferase-isomerase (347 aa).

This sequence belongs to the QueA family. In terms of assembly, monomer.

The protein resides in the cytoplasm. It catalyses the reaction 7-aminomethyl-7-carbaguanosine(34) in tRNA + S-adenosyl-L-methionine = epoxyqueuosine(34) in tRNA + adenine + L-methionine + 2 H(+). It participates in tRNA modification; tRNA-queuosine biosynthesis. In terms of biological role, transfers and isomerizes the ribose moiety from AdoMet to the 7-aminomethyl group of 7-deazaguanine (preQ1-tRNA) to give epoxyqueuosine (oQ-tRNA). This Pseudomonas aeruginosa (strain LESB58) protein is S-adenosylmethionine:tRNA ribosyltransferase-isomerase.